Here is a 23-residue protein sequence, read N- to C-terminus: Keratin (23 aa).

In terms of domain architecture, IF rod spans 1 to 23 (YSSQLAQVQGLIGNVESQLAEIR). A coil 2 region spans residues 1–23 (YSSQLAQVQGLIGNVESQLAEIR).

This sequence belongs to the intermediate filament family.

The protein is Keratin of Cervus elaphus (Red deer).